The sequence spans 301 residues: Glycerol-3-phosphate dehydrogenase [NAD(P)+] (301 aa).

NADPH-binding residues include tryptophan 13, arginine 33, and lysine 78. Residues lysine 78 and glycine 106 each coordinate sn-glycerol 3-phosphate. Position 110 (alanine 110) interacts with NADPH. Positions 161, 214, 224, 225, and 226 each coordinate sn-glycerol 3-phosphate. Lysine 161 acts as the Proton acceptor in catalysis. Arginine 225 is an NADPH binding site. Glutamate 251 lines the NADPH pocket.

This sequence belongs to the NAD-dependent glycerol-3-phosphate dehydrogenase family.

The protein localises to the cytoplasm. It catalyses the reaction sn-glycerol 3-phosphate + NAD(+) = dihydroxyacetone phosphate + NADH + H(+). It carries out the reaction sn-glycerol 3-phosphate + NADP(+) = dihydroxyacetone phosphate + NADPH + H(+). It functions in the pathway membrane lipid metabolism; glycerophospholipid metabolism. Its function is as follows. Catalyzes the reduction of the glycolytic intermediate dihydroxyacetone phosphate (DHAP) to sn-glycerol 3-phosphate (G3P), the key precursor for phospholipid synthesis. The chain is Glycerol-3-phosphate dehydrogenase [NAD(P)+] from Synechococcus sp. (strain RCC307).